Reading from the N-terminus, the 215-residue chain is Porin MspB (215 aa).

The N-terminal stretch at 1 to 31 (MTAFKRVLIAMISALLAGTTGMFVSAGAAHA) is a signal peptide.

The protein belongs to the mycobacterial porin (TC 1.B.24) family. As to quaternary structure, octamers. Probably forms a goblet with the wide end on the exterior of the outer membrane and a central channel. It is not known if mixed oligomers of MspB with other Msp subunits form in vivo.

It localises to the cell outer membrane. It is found in the secreted. Its subcellular location is the cell wall. A backup porin induced when MspA, the major porin, is deleted. Probably forms a water-filled channel which favors the permeation of cations. There are about 2400 porins in wild-type, 800 in an mspA deletion and 150 in a double mspA-mspC deletion. A triple mspA-mspC-mspD deletion mutant has low but detectable channel activity. Different conductance values with maxima at 2.3 and 4.6 nanosiemens might be caused by a simultaneous reconstitution of MspB channels into the membrane or by the existence of different MspB conformations. The polypeptide is Porin MspB (mspB) (Mycolicibacterium smegmatis (strain ATCC 700084 / mc(2)155) (Mycobacterium smegmatis)).